The following is an 81-amino-acid chain: MARKKAALDFEQSLADLQALVERLENGELSLEDSLTAFEQGVRLTRDCQSALTQAEQKVQVLLERDGELSEEPFDDAELPE.

The protein belongs to the XseB family. Heterooligomer composed of large and small subunits.

It is found in the cytoplasm. The enzyme catalyses Exonucleolytic cleavage in either 5'- to 3'- or 3'- to 5'-direction to yield nucleoside 5'-phosphates.. Its function is as follows. Bidirectionally degrades single-stranded DNA into large acid-insoluble oligonucleotides, which are then degraded further into small acid-soluble oligonucleotides. This is Exodeoxyribonuclease 7 small subunit from Pseudomonas syringae pv. syringae (strain B728a).